The sequence spans 299 residues: Acarbose 7(IV)-phosphotransferase (299 aa).

Belongs to the carbohydrate kinase PfkB family.

It catalyses the reaction acarbose + ATP = acarbose 7(IV)-phosphate + ADP + H(+). Its function is as follows. Catalyzes the phosphorylation of the alpha-glucosidase inhibitor acarbose. Phosphorylation of acarbose could be a resistance-like self-protection mechanism. The sequence is that of Acarbose 7(IV)-phosphotransferase from Actinoplanes sp. (strain ATCC 31044 / CBS 674.73 / SE50/110).